Consider the following 397-residue polypeptide: Acylalkylpyrone synthase csyB (397 aa).

Residues Lys50 and 50–57 (KMLEINRK) contribute to the CoA site. Cys155 functions as the Nucleophile in the catalytic mechanism. A substrate-binding site is contributed by 214–215 (GD). CoA is bound by residues Ile267, Gly312, 312 to 315 (GGYA), Tyr314, and Ala315. Residue His377 is part of the active site.

It belongs to the thiolase-like superfamily. Chalcone/stilbene synthases family. As to quaternary structure, homodimer.

Its function is as follows. Acylalkylpyrone synthase that catalyzes not only the polyketide chain elongation but also the one-pot condensation of two beta-ketoacyl units to produce the 3-acyl-4-hydroxy-6-alkyl-alpha-pyrone (AcAP) scaffold, a precursor of csypyrone B. The enzyme reaction is initiated by the loading of acetoacetyl-CoA onto Cys-155, and subsequent thioester bond cleavage by the nucleophilic water generates the beta-keto acid intermediate, which is placed within a pocket. The second beta-ketoacyl unit is then produced by polyketide chain elongation of fatty acyl-CoA with one molecule of malonyl-CoA, and the condensation with the beta-ketoacid generates the final products. Csypyrone B1 is the major product and contains a propanoic acid side-chain, whereas csypyrones B2 and B3 are minor compounds that contain butyric or pentanoic acid side-chains, respectively. The sequence is that of Acylalkylpyrone synthase csyB from Aspergillus oryzae (strain ATCC 42149 / RIB 40) (Yellow koji mold).